The primary structure comprises 314 residues: Ferrochelatase (314 aa).

Fe cation-binding residues include H184 and E259.

This sequence belongs to the ferrochelatase family.

The protein localises to the cytoplasm. It catalyses the reaction heme b + 2 H(+) = protoporphyrin IX + Fe(2+). It participates in porphyrin-containing compound metabolism; protoheme biosynthesis; protoheme from protoporphyrin-IX: step 1/1. Its function is as follows. Catalyzes the ferrous insertion into protoporphyrin IX. This Chlamydia trachomatis serovar D (strain ATCC VR-885 / DSM 19411 / UW-3/Cx) protein is Ferrochelatase.